We begin with the raw amino-acid sequence, 84 residues long: Hydramacin-1 (84 aa).

The signal sequence occupies residues 1–24 (MRTVVFFILVSIFLVALKPTGTQA). Gln-25 carries the pyrrolidone carboxylic acid modification. 4 cysteine pairs are disulfide-bonded: Cys-29–Cys-72, Cys-36–Cys-65, Cys-51–Cys-81, and Cys-55–Cys-83.

In terms of tissue distribution, expressed in the endodermal epithelium.

It localises to the secreted. The protein resides in the target cell membrane. Cationic antimicrobial peptide potently active against Gram-positive and Gram-negative bacteria including multi-resistant human pathogenic strains. Is not active against the Gram-positive Coccus species, Gram-negative non-fermentation species and against the fungus C.albicans. It leads to aggregation of bacteria as an initial step of its bactericidal mechanism. Aggregated cells are connected via electron-dense contacts and adopt a thorn apple-like morphology. Hydramycin contains a belt of positively charged residues that separate two hydrophobic areas. This structure may explain the observed aggregation of bacteria, since each of these areas can immerse into the outer leaflets of the membranes of two individual bacteria. Is able to permeabilize membranes of viable bacteria at low and neutral pH values, but no pore-forming activity is not detected. The sequence is that of Hydramacin-1 from Hydra vulgaris (Hydra).